The sequence spans 356 residues: 3-dehydroquinate synthase (356 aa).

NAD(+) contacts are provided by residues 69 to 74 (DGEKFK), 103 to 107 (GVIGD), 127 to 128 (TT), Lys140, Lys149, and 167 to 170 (CLKT). Residues Glu182, His245, and His262 each contribute to the Zn(2+) site.

Belongs to the sugar phosphate cyclases superfamily. Dehydroquinate synthase family. Co(2+) serves as cofactor. The cofactor is Zn(2+). NAD(+) is required as a cofactor.

It localises to the cytoplasm. It carries out the reaction 7-phospho-2-dehydro-3-deoxy-D-arabino-heptonate = 3-dehydroquinate + phosphate. The protein operates within metabolic intermediate biosynthesis; chorismate biosynthesis; chorismate from D-erythrose 4-phosphate and phosphoenolpyruvate: step 2/7. Catalyzes the conversion of 3-deoxy-D-arabino-heptulosonate 7-phosphate (DAHP) to dehydroquinate (DHQ). This chain is 3-dehydroquinate synthase, found in Psychromonas ingrahamii (strain DSM 17664 / CCUG 51855 / 37).